The sequence spans 81 residues: UPF0180 protein YkuS (81 aa).

This sequence belongs to the UPF0180 family.

The polypeptide is UPF0180 protein YkuS (ykuS) (Bacillus subtilis (strain 168)).